The chain runs to 1057 residues: Hemophilin receptor (1057 aa).

Residues 168 to 285 enclose the TBDR plug domain; the sequence is KVYDANRSSV…VGGAVVVKTL (118 aa). One can recognise a TBDR beta-barrel domain in the interval 296–1057; it reads SFGAELKVEG…TMKISWTTKF (762 aa).

This sequence belongs to the TonB-dependent receptor family.

It is found in the cell outer membrane. In terms of biological role, part of a high affinity heme acquisition system. Functions as a gateway for heme entry into the bacterial cell, enabling growth on hemoprotein sources. Can acquire heme directly from hemoprotein reservoirs, however, HphA likely enhances the efficiency of this process by delivering heme to HphR. Is essential for virulence, bacterial dissemination and growth in the blood. The sequence is that of Hemophilin receptor from Acinetobacter baumannii.